We begin with the raw amino-acid sequence, 116 residues long: Large ribosomal subunit protein uL22 (116 aa).

The protein belongs to the universal ribosomal protein uL22 family. Part of the 50S ribosomal subunit.

Functionally, this protein binds specifically to 23S rRNA; its binding is stimulated by other ribosomal proteins, e.g. L4, L17, and L20. It is important during the early stages of 50S assembly. It makes multiple contacts with different domains of the 23S rRNA in the assembled 50S subunit and ribosome. The globular domain of the protein is located near the polypeptide exit tunnel on the outside of the subunit, while an extended beta-hairpin is found that lines the wall of the exit tunnel in the center of the 70S ribosome. This chain is Large ribosomal subunit protein uL22, found in Leptospira biflexa serovar Patoc (strain Patoc 1 / Ames).